A 132-amino-acid polypeptide reads, in one-letter code: Small ribosomal subunit protein uS9 (132 aa).

The protein belongs to the universal ribosomal protein uS9 family.

The chain is Small ribosomal subunit protein uS9 from Mesomycoplasma hyopneumoniae (strain 232) (Mycoplasma hyopneumoniae).